Here is a 448-residue protein sequence, read N- to C-terminus: Ribosomal protein uS12 methylthiotransferase RimO (448 aa).

One can recognise an MTTase N-terminal domain in the interval 6–116; it reads PKVGIVSLGC…VVEAVHAAIP (111 aa). [4Fe-4S] cluster contacts are provided by Cys15, Cys51, Cys80, Cys147, Cys151, and Cys154. A Radical SAM core domain is found at 133 to 371; it reads LTPHHYAYLK…EAARQIADER (239 aa). Positions 373 to 439 constitute a TRAM domain; that stretch reads AAKEGTRIEV…DYDLWGDVVE (67 aa).

The protein belongs to the methylthiotransferase family. RimO subfamily. [4Fe-4S] cluster is required as a cofactor.

Its subcellular location is the cytoplasm. The catalysed reaction is L-aspartate(89)-[ribosomal protein uS12]-hydrogen + (sulfur carrier)-SH + AH2 + 2 S-adenosyl-L-methionine = 3-methylsulfanyl-L-aspartate(89)-[ribosomal protein uS12]-hydrogen + (sulfur carrier)-H + 5'-deoxyadenosine + L-methionine + A + S-adenosyl-L-homocysteine + 2 H(+). Functionally, catalyzes the methylthiolation of an aspartic acid residue of ribosomal protein uS12. The polypeptide is Ribosomal protein uS12 methylthiotransferase RimO (Paramagnetospirillum magneticum (strain ATCC 700264 / AMB-1) (Magnetospirillum magneticum)).